The sequence spans 463 residues: L-seryl-tRNA(Sec) selenium transferase (463 aa).

Lysine 295 carries the N6-(pyridoxal phosphate)lysine modification.

This sequence belongs to the SelA family. Homodecamer; pentamer of dimers. Binds only one seryl-tRNA(Sec) per dimer. Pyridoxal 5'-phosphate is required as a cofactor.

It is found in the cytoplasm. It catalyses the reaction L-seryl-tRNA(Sec) + selenophosphate + H(+) = L-selenocysteinyl-tRNA(Sec) + phosphate. Its pathway is aminoacyl-tRNA biosynthesis; selenocysteinyl-tRNA(Sec) biosynthesis; selenocysteinyl-tRNA(Sec) from L-seryl-tRNA(Sec) (bacterial route): step 1/1. Converts seryl-tRNA(Sec) to selenocysteinyl-tRNA(Sec) required for selenoprotein biosynthesis. The polypeptide is L-seryl-tRNA(Sec) selenium transferase (Escherichia coli O6:H1 (strain CFT073 / ATCC 700928 / UPEC)).